Reading from the N-terminus, the 1060-residue chain is DNA topoisomerase 1 (1060 aa).

Residues 1-141 form the Toprim domain; sequence MILVIAEKPN…KRMKFSALTK (141 aa). The Mg(2+) site is built by Glu7 and Asp107. Residues 156–947 enclose the Topo IA-type catalytic domain; sequence NFGMANAGIA…EAKIRLTKIL (792 aa). The tract at residues 196–201 is interaction with DNA; that stretch reads STGRVQ. The DOD-type homing endonuclease domain occupies 482 to 591; that stretch reads LIGYLAGKGG…IKVYLQLLGI (110 aa). The active-site O-(5'-phospho-DNA)-tyrosine intermediate is the Tyr690. The C4-type 1 zinc-finger motif lies at 978 to 1006; it reads CPKCGGDLIVKYNEKTGKRFVGCSNWPKC. The C4-type 2; atypical zinc finger occupies 1025–1050; sequence CCNGAPVVIIREKDGREWEICLDMNC.

The protein belongs to the type IA topoisomerase family. In terms of assembly, monomer. Requires Mg(2+) as cofactor. In terms of processing, this protein undergoes a protein self splicing that involves a post-translational excision of the intervening region (intein) followed by peptide ligation.

It carries out the reaction ATP-independent breakage of single-stranded DNA, followed by passage and rejoining.. Functionally, releases the supercoiling and torsional tension of DNA, which is introduced during the DNA replication and transcription, by transiently cleaving and rejoining one strand of the DNA duplex. Introduces a single-strand break via transesterification at a target site in duplex DNA. The scissile phosphodiester is attacked by the catalytic tyrosine of the enzyme, resulting in the formation of a DNA-(5'-phosphotyrosyl)-enzyme intermediate and the expulsion of a 3'-OH DNA strand. The free DNA strand then undergoes passage around the unbroken strand, thus removing DNA supercoils. Finally, in the religation step, the DNA 3'-OH attacks the covalent intermediate to expel the active-site tyrosine and restore the DNA phosphodiester backbone. In Pyrococcus furiosus (strain ATCC 43587 / DSM 3638 / JCM 8422 / Vc1), this protein is DNA topoisomerase 1 (topA).